Here is a 186-residue protein sequence, read N- to C-terminus: EF-hand protein 5 (186 aa).

Residues 1–23 (MSRSKEVSPNLSQQKRGDVRSAG) are disordered. EF-hand domains follow at residues 41 to 76 (SAELQEGYRILTGGQKANIISDKDLFKAIHSCGLHT), 77 to 112 (SEEEVNDLLRVVHQDERTLGLEFPEFMMLMTKGIDE), 113 to 148 (ASIAEMRRPFSVLDKAKTGVITKKQFTELFVSSGEH), and 149 to 186 (SSAEELEELMLLAETSEELEVVDYNKLINELAILLNKM). The Ca(2+) site is built by glutamate 98, aspartate 126, and threonine 130.

The chain is EF-hand protein 5 from Leishmania tarentolae (Sauroleishmania tarentolae).